A 989-amino-acid chain; its full sequence is Vacuolar membrane protease (989 aa).

A disordered region spans residues 1–25 (MDRQSLRTTLRAMDASNENGSAKGA). Residues 1-41 (MDRQSLRTTLRAMDASNENGSAKGAKKTTIGSFVRWTFGFN) are Cytoplasmic-facing. Residues 42-62 (SVPLTTLVTITTVLLGLLVYV) traverse the membrane as a helical segment. Residues 63–383 (STSVNPPDVT…YLFIILPLQY (321 aa)) lie on the Vacuolar side of the membrane. The Zn(2+) site is built by His181 and Asp193. Residue Glu227 is the Proton acceptor of the active site. Residue Glu228 participates in Zn(2+) binding. Asn245 is a glycosylation site (N-linked (GlcNAc...) asparagine). Zn(2+) contacts are provided by Glu253 and His325. Residues 384–404 (IFVISCLTLAVGPIFVGFLFL) form a helical membrane-spanning segment. At 405-426 (LVLRKQINAGTSETILGGWLRS) the chain is on the cytoplasmic side. The helical transmembrane segment at 427–447 (IVSVLVSVVATYFVVETLHLG) threads the bilayer. The Vacuolar portion of the chain corresponds to 448–460 (NELYVVRSFYTPL). Residues 461–481 (FAGLGTFIFVNYVLLGFFHFV) form a helical membrane-spanning segment. Over 482–488 (RPVCDQK) the chain is Cytoplasmic. A helical transmembrane segment spans residues 489–509 (LIILLELSVVLWVLLLLSVIH). At 510-520 (EATHKATGEYH) the chain is on the vacuolar side. The chain crosses the membrane as a helical span at residues 521–541 (FLILYIVVATASILGLFGHLV). Over 542–611 (TSTETSTFVE…IAVSMGYDWS (70 aa)) the chain is Cytoplasmic. The tract at residues 548 to 576 (TFVEGPEDEEDTVDASEATETSPLLPEAS) is disordered. Positions 552–561 (GPEDEEDTVD) are enriched in acidic residues. A helical membrane pass occupies residues 612 to 632 (IQFLLVVPITFFVTFGLAASL). The Vacuolar portion of the chain corresponds to 633 to 648 (LDGLHQTPLESEKSAD). Residues 649 to 669 (FVYTTITAMSVLVGITFLPFV) traverse the membrane as a helical segment. The Cytoplasmic segment spans residues 670 to 673 (HKLQ). A helical membrane pass occupies residues 674-694 (VFVPIVVVGVAVTASFVHILS). Topologically, residues 695–989 (PPFSSNAPAK…LVEVSKYVEL (295 aa)) are vacuolar. N-linked (GlcNAc...) asparagine glycosylation is found at Asn745, Asn793, and Asn822.

The protein belongs to the peptidase M28 family. Zn(2+) serves as cofactor.

Its subcellular location is the vacuole membrane. Functionally, may be involved in vacuolar sorting and osmoregulation. The protein is Vacuolar membrane protease of Yarrowia lipolytica (strain CLIB 122 / E 150) (Yeast).